Consider the following 1014-residue polypeptide: RNA-directed RNA polymerase (1014 aa).

In terms of domain architecture, RdRp catalytic spans 618–740 (HELEEGDYTC…ANHQGEFHSY (123 aa)). A disordered region spans residues 918-1014 (KEEDERQPET…TLVFKNSSLS (97 aa)). Over residues 956–967 (KGKRKVKGRRPR) the composition is skewed to basic residues.

It belongs to the nodaviridae RNA polymerase family.

It carries out the reaction RNA(n) + a ribonucleoside 5'-triphosphate = RNA(n+1) + diphosphate. Its function is as follows. RNA-dependent RNA polymerase which replicates the viral genome composed of 2 RNA segments, RNA1 and RNA2. This is RNA-directed RNA polymerase from Pieris rapae (Small white butterfly).